The primary structure comprises 342 residues: MSVHPTQTLSLSQYLIEEQLKLPQATGDFTALMSHLVYAAKIVSREVRKAGLLENVLGSNETVNVQGETQMKLDEYADKVFNHTLTRSGHLCILGSEEHEETVSVPSGYKIGKYTIAIDPLDGSSNIDANVSIGTIFSVHLRKSPADTPGTLSDLLQKGSGQRAAGYVLYGSSTMLVLCTGKGVSGFTLDPSCGEFILSHPDMQMPETGGIYSINEGNYNYWSDEVKNYIRDIKSIEGGKKPQSGRYIGSLVADFHRNLLKGGIFLYPNDTKSTKYPNGKLRLLYEAAPMAFIAEQAGGMAVTVYGERILDLTPKELHERTTLVVGSKKEVEHFLKFAPKKP.

Residues glutamate 97, aspartate 119, leucine 121, and aspartate 122 each contribute to the Mg(2+) site. Substrate contacts are provided by residues 122-125 (DGSS), asparagine 215, tyrosine 247, and lysine 280. Position 286 (glutamate 286) interacts with Mg(2+).

It belongs to the FBPase class 1 family. Homotetramer. Mg(2+) serves as cofactor.

Its subcellular location is the cytoplasm. It catalyses the reaction beta-D-fructose 1,6-bisphosphate + H2O = beta-D-fructose 6-phosphate + phosphate. Its pathway is carbohydrate biosynthesis; gluconeogenesis. This Leptospira borgpetersenii serovar Hardjo-bovis (strain JB197) protein is Fructose-1,6-bisphosphatase class 1.